Here is a 302-residue protein sequence, read N- to C-terminus: Acetaldehyde dehydrogenase (302 aa).

Cysteine 131 functions as the Acyl-thioester intermediate in the catalytic mechanism. NAD(+)-binding positions include serine 162–asparagine 170 and asparagine 273.

Belongs to the acetaldehyde dehydrogenase family.

It carries out the reaction acetaldehyde + NAD(+) + CoA = acetyl-CoA + NADH + H(+). The chain is Acetaldehyde dehydrogenase from Acidovorax sp. (strain JS42).